The chain runs to 160 residues: MRLLILAVGKLKQGPERELAERYRARFDDLGRKLGFRGLDVHEIAESRAREAPARMAEEAAAIIAQVPDGAVLVTLDERGQSLGSTAFAAQLGRWRDEQVPGTIFVIGGADGLLPELRRKAKLSMSFGGATWPHQMVRVMLLEQIYRAATILAGHPYHRA.

2 residues coordinate S-adenosyl-L-methionine: Leu76 and Gly108.

This sequence belongs to the RNA methyltransferase RlmH family. In terms of assembly, homodimer.

It is found in the cytoplasm. The catalysed reaction is pseudouridine(1915) in 23S rRNA + S-adenosyl-L-methionine = N(3)-methylpseudouridine(1915) in 23S rRNA + S-adenosyl-L-homocysteine + H(+). In terms of biological role, specifically methylates the pseudouridine at position 1915 (m3Psi1915) in 23S rRNA. The sequence is that of Ribosomal RNA large subunit methyltransferase H from Rhodopseudomonas palustris (strain ATCC BAA-98 / CGA009).